The primary structure comprises 639 residues: Chaperone protein DnaK 1 (639 aa).

Threonine 199 is modified (phosphothreonine; by autocatalysis). Residues 603–612 (QQQAQAQQAP) show a composition bias toward low complexity. The tract at residues 603–639 (QQQAQAQQAPGGEGEQEAKQDDNVVDAEFEEVKDEKK) is disordered. The segment covering 625 to 639 (NVVDAEFEEVKDEKK) has biased composition (acidic residues).

Belongs to the heat shock protein 70 family.

Acts as a chaperone. The chain is Chaperone protein DnaK 1 from Photobacterium profundum (strain SS9).